Here is a 466-residue protein sequence, read N- to C-terminus: Probable fibrosin-1 (466 aa).

Residue Lys-8 forms a Glycyl lysine isopeptide (Lys-Gly) (interchain with G-Cter in SUMO2) linkage. Asymmetric dimethylarginine is present on residues Arg-229 and Arg-239. 2 disordered regions span residues 236 to 315 (AWVR…AAAA) and 410 to 466 (LLYS…RADR). Residues 248–272 (GSDKERPMERREPSVTKEEKDRDLP) are compositionally biased toward basic and acidic residues. Ser-281 is modified (phosphoserine). Over residues 288–311 (RAGEEGARPAKESVRVKEERKEEA) the composition is skewed to basic and acidic residues. The segment covering 442 to 459 (APPPLVPAPRPSSPPRAP) has biased composition (pro residues).

In Mus musculus (Mouse), this protein is Probable fibrosin-1 (Fbrs).